The sequence spans 128 residues: MRFALTVTGPAYGTQQASSAWQFAQAVLQEGHELACVFFYREGVLNANQLTAPASDEFDLVRGWQSLHDEHGVALHICVAAALRRGVTDEREAQQLALPGHNLQPGFTLSGLGALAEAALTCDRMVQF.

The active-site Cysteine persulfide intermediate is cysteine 78.

Belongs to the DsrE/TusD family. Heterohexamer, formed by a dimer of trimers. The hexameric TusBCD complex contains 2 copies each of TusB, TusC and TusD. The TusBCD complex interacts with TusE.

Its subcellular location is the cytoplasm. Its function is as follows. Part of a sulfur-relay system required for 2-thiolation of 5-methylaminomethyl-2-thiouridine (mnm(5)s(2)U) at tRNA wobble positions. Accepts sulfur from TusA and transfers it in turn to TusE. The sequence is that of Sulfurtransferase TusD from Klebsiella pneumoniae subsp. pneumoniae (strain ATCC 700721 / MGH 78578).